Here is a 470-residue protein sequence, read N- to C-terminus: Nuclear receptor subfamily 0 group B member 1 (470 aa).

A run of 3 repeats spans residues 1 to 67 (MAGE…YRCC), 68 to 133 (FCGK…YRCC), and 134 to 200 (FCGE…YRCC). The interval 1–253 (MAGENHQWQG…RPVALKNPQV (253 aa)) is 4 X 67 AA tandem repeats. Short sequence motifs (LXXLL motif) lie at residues 13 to 17 (LYNML), 80 to 84 (LYSML), and 146 to 150 (LYSLL). A 4; truncated repeat occupies 201-253 (FCGEDHPQQGSTLYCMPTSTNQAQAAPEERPRAPWWDASSGALRPVALKNPQV). One can recognise an NR LBD domain in the interval 215–469 (CMPTSTNQAQ…DMMLEMLCTK (255 aa)). The short motif at 461-466 (MMLEML) is the AF-2 motif element.

The protein belongs to the nuclear hormone receptor family. NR0 subfamily. In terms of assembly, homodimer. Interacts with NR5A1, NR5A2, NR0B2 and with COPS2. Interacts with ESRRB; represses ESRRB activity at the GATA6 promoter.

The protein resides in the nucleus. The protein localises to the cytoplasm. Functionally, nuclear receptor that lacks a DNA-binding domain and acts as a corepressor that inhibits the transcriptional activity of other nuclear receptors through heterodimeric interactions. Component of a cascade required for the development of the hypothalamic-pituitary-adrenal-gonadal axis. May also have a role in the development of the embryo and in the maintenance of embryonic stem cell pluripotency. The chain is Nuclear receptor subfamily 0 group B member 1 (NR0B1) from Pongo pygmaeus (Bornean orangutan).